The primary structure comprises 39 residues: Alpha-conotoxin ArIA (39 aa).

Residues 1–17 (SDGRNVAAKAFHRIGRT) constitute a propeptide that is removed on maturation. Intrachain disulfides connect Cys-22–Cys-28 and Cys-23–Cys-36. Residues 24-26 (SNP) form a ser-Xaa-Pro motif, crucial for potent interaction with nAChR region. Pro-33 bears the 4-hydroxyproline; in ArIA mark.

Belongs to the conotoxin A superfamily. In terms of tissue distribution, expressed by the venom duct.

It localises to the secreted. In terms of biological role, alpha-conotoxins act on postsynaptic membranes, they bind to the nicotinic acetylcholine receptors (nAChR) and thus inhibit them. This toxin acts as a competitive inhibitor and is 3-fold more potent on alpha-7/CHRNA7 nAChRs (IC(50)=6 nM) than on alpha-3-beta-2/CHRNA3-CHRNB2 nAChR (IC(50)=18 nM). Its function is as follows. Acts as a competitive inhibitor and is 33-fold more potent on alpha-7/CHRNA7 nAChRs (IC(50)=1.8 nM) than on alpha-3-beta-2/CHRNA3-CHRNB2 nAChR (IC(50)=60.1 nM). In Conus arenatus (Sand-dusted cone), this protein is Alpha-conotoxin ArIA.